Reading from the N-terminus, the 206-residue chain is Protein SUE1, mitochondrial (206 aa).

Residues 1 to 24 constitute a mitochondrion transit peptide; it reads MILLKRTKIRGVSVSFVSLQRRTH.

The protein resides in the mitochondrion envelope. Functionally, required for degradation of unstable forms of cytochrome c. This chain is Protein SUE1, mitochondrial, found in Saccharomyces cerevisiae (strain ATCC 204508 / S288c) (Baker's yeast).